Consider the following 95-residue polypeptide: FMRFamide-like neuropeptides 16 (95 aa).

An N-terminal signal peptide occupies residues 1–24; that stretch reads MSLSGFEFSSIIAVLLLLIQLSSA. Positions 25–58 are excised as a propeptide; the sequence is AVLPVDYASQYGVASADEMTALPEEGSLFAERPA. Phenylalanine amide occurs at positions 67, 77, and 87. Residues 90–95 constitute a propeptide that is removed on maturation; sequence SAPFEQ.

Belongs to the FARP (FMRFamide related peptide) family.

It localises to the secreted. FMRFamides and FMRFamide-like peptides are neuropeptides. AQTFVRF-amide inhibits the activity of dissected pharyngeal myogenic muscle system. The polypeptide is FMRFamide-like neuropeptides 16 (flp-16) (Caenorhabditis briggsae).